The primary structure comprises 117 residues: Swarming motility protein SwrAA (117 aa).

It localises to the cytoplasm. In terms of biological role, required for swarm cell differentiation. Plays a crucial role in regulating the degree of cell flagellation. This chain is Swarming motility protein SwrAA (swrAA), found in Bacillus subtilis (strain 168).